A 160-amino-acid chain; its full sequence is Triabin (160 aa).

A signal peptide spans 1–18; it reads MKTIIAVTIFGILTCAYA. 3 disulfide bridges follow: cysteine 24–cysteine 128, cysteine 57–cysteine 160, and cysteine 87–cysteine 102.

This sequence belongs to the calycin superfamily. Triabin family. Expressed in salivary glands.

The protein localises to the secreted. Thrombin inhibitor. Forms a non-covalent complex with thrombin at a molar ratio of 1:1. Inhibits thrombin-induced platelet aggregation. Prolongs thrombin clotting time and activated partial thromboplastin time. It only minimally suppresses the amidolytic activity of thrombin. Inhibits thrombin-mediated fibrin formation in the host. Inhibits thrombin-induced endothelium-dependent relaxant and contractile responses in host blood vessels. Inhibits thrombin-induced mitogenesis in host vascular smooth muscle cells. In Meccus pallidipennis (Triatomine bug), this protein is Triabin.